Consider the following 588-residue polypeptide: Aspartate--tRNA ligase (588 aa).

L-aspartate is bound at residue glutamate 171. The aspartate stretch occupies residues glutamine 195–lysine 198. An L-aspartate-binding site is contributed by arginine 217. ATP-binding positions include arginine 217–glutamate 219 and glutamine 226. Position 447 (histidine 447) interacts with L-aspartate. Glutamate 481 provides a ligand contact to ATP. Arginine 488 serves as a coordination point for L-aspartate. Residue glycine 533 to arginine 536 coordinates ATP.

The protein belongs to the class-II aminoacyl-tRNA synthetase family. Type 1 subfamily. As to quaternary structure, homodimer.

Its subcellular location is the cytoplasm. It carries out the reaction tRNA(Asp) + L-aspartate + ATP = L-aspartyl-tRNA(Asp) + AMP + diphosphate. Its function is as follows. Catalyzes the attachment of L-aspartate to tRNA(Asp) in a two-step reaction: L-aspartate is first activated by ATP to form Asp-AMP and then transferred to the acceptor end of tRNA(Asp). The protein is Aspartate--tRNA ligase of Aeromonas salmonicida (strain A449).